Here is a 573-residue protein sequence, read N- to C-terminus: Sulfite reductase [NADPH] hemoprotein beta-component (573 aa).

[4Fe-4S] cluster contacts are provided by C438, C444, C483, and C487. C487 provides a ligand contact to siroheme.

Belongs to the nitrite and sulfite reductase 4Fe-4S domain family. As to quaternary structure, alpha(8)-beta(8). The alpha component is a flavoprotein, the beta component is a hemoprotein. It depends on siroheme as a cofactor. The cofactor is [4Fe-4S] cluster.

It catalyses the reaction hydrogen sulfide + 3 NADP(+) + 3 H2O = sulfite + 3 NADPH + 4 H(+). Its pathway is sulfur metabolism; hydrogen sulfide biosynthesis; hydrogen sulfide from sulfite (NADPH route): step 1/1. Functionally, component of the sulfite reductase complex that catalyzes the 6-electron reduction of sulfite to sulfide. This is one of several activities required for the biosynthesis of L-cysteine from sulfate. The protein is Sulfite reductase [NADPH] hemoprotein beta-component of Nitrosomonas eutropha (strain DSM 101675 / C91 / Nm57).